A 79-amino-acid chain; its full sequence is Conotoxin 1 (79 aa).

Positions 1 to 22 are cleaved as a signal peptide; sequence MKLTCVLIITVLFLTASQLITA. A propeptide spanning residues 23–46 is cleaved from the precursor; sequence DYSRDQRQYRAVRLGDEMRTFKGA. 3 disulfide bridges follow: cysteine 49–cysteine 62, cysteine 56–cysteine 67, and cysteine 61–cysteine 77.

The protein belongs to the conotoxin O1 superfamily. In terms of tissue distribution, expressed by the venom duct.

It is found in the secreted. The sequence is that of Conotoxin 1 from Conus vexillum (Flag cone).